A 150-amino-acid chain; its full sequence is Endoribonuclease YbeY (150 aa).

The Zn(2+) site is built by H116, H120, and H126.

The protein belongs to the endoribonuclease YbeY family. Zn(2+) serves as cofactor.

The protein localises to the cytoplasm. Its function is as follows. Single strand-specific metallo-endoribonuclease involved in late-stage 70S ribosome quality control and in maturation of the 3' terminus of the 16S rRNA. The chain is Endoribonuclease YbeY from Beutenbergia cavernae (strain ATCC BAA-8 / DSM 12333 / CCUG 43141 / JCM 11478 / NBRC 16432 / NCIMB 13614 / HKI 0122).